Here is a 336-residue protein sequence, read N- to C-terminus: HTH-type transcriptional repressor PurR (336 aa).

An HTH lacI-type domain is found at 2–56 (ATIKDVAKMAGVSTTTVSHVINKTRFVAKDTEEAVLSAIKQLNYSPSAVARSLKV). A DNA-binding region (H-T-H motif) is located at residues 4–23 (IKDVAKMAGVSTTTVSHVIN). A DNA-binding region spans residues 48 to 56 (SAVARSLKV). The hypoxanthine site is built by Tyr-73, Lys-188, Thr-190, Phe-219, and Asp-273.

Homodimer.

Its pathway is purine metabolism; purine nucleotide biosynthesis [regulation]. Is the main repressor of the genes involved in the de novo synthesis of purine nucleotides, regulating purB, purC, purEK, purF, purHD, purL, purMN and guaBA expression. PurR is allosterically activated to bind its cognate DNA by binding the purine corepressors, hypoxanthine or guanine, thereby effecting transcription repression. This is HTH-type transcriptional repressor PurR from Haemophilus influenzae (strain ATCC 51907 / DSM 11121 / KW20 / Rd).